A 131-amino-acid chain; its full sequence is MNSMVLELRKKMSSGPDCVIGRPPHILPPQKGVYLLTNISQLIGPVQQNDRGLWRHNGMHTQNLSHHFTGPFICAVIARPINKRTHIGIHVLNQNNELPAIFTIQYPEPPHLTDNPGAVRKSQKSLIPPYN.

Positions 112-131 (LTDNPGAVRKSQKSLIPPYN) are disordered.

This is an uncharacterized protein from Fowl adenovirus A serotype 1 (strain CELO / Phelps) (FAdV-1).